We begin with the raw amino-acid sequence, 543 residues long: CBS domain-containing protein CBSCBSPB1 (543 aa).

Residues 1–35 (MASQGGPRRSLSVTTASLHGKKKSMDMAERGLDTG) form a disordered region. At Ser17 the chain carries Phosphoserine. Over residues 23 to 35 (KSMDMAERGLDTG) the composition is skewed to basic and acidic residues. CBS domains are found at residues 59 to 118 (RLSK…NVEE), 125 to 183 (MTKN…RAAE), 225 to 285 (IIPD…LPPS), and 293 to 350 (MTQN…AGTT). Positions 372 to 393 (LSPNEDDEDSRSESSMKVASEA) are disordered. Residues 402–489 (ANTFSFKIED…KSLRLHLDDS (88 aa)) form the PB1 domain. The chain crosses the membrane as a helical span at residues 518–538 (AYSGVAAGAALVAGLGFMAFL).

It localises to the membrane. In Arabidopsis thaliana (Mouse-ear cress), this protein is CBS domain-containing protein CBSCBSPB1 (CBSCBSPB1).